The primary structure comprises 165 residues: 3-isopropylmalate dehydratase small subunit (165 aa).

This sequence belongs to the LeuD family. LeuD type 2 subfamily. In terms of assembly, heterodimer of LeuC and LeuD.

The catalysed reaction is (2R,3S)-3-isopropylmalate = (2S)-2-isopropylmalate. It participates in amino-acid biosynthesis; L-leucine biosynthesis; L-leucine from 3-methyl-2-oxobutanoate: step 2/4. Functionally, catalyzes the isomerization between 2-isopropylmalate and 3-isopropylmalate, via the formation of 2-isopropylmaleate. This chain is 3-isopropylmalate dehydratase small subunit, found in Saccharolobus islandicus (strain Y.N.15.51 / Yellowstone #2) (Sulfolobus islandicus).